Here is a 235-residue protein sequence, read N- to C-terminus: 7-cyano-7-deazaguanine synthase (235 aa).

12 to 22 contributes to the ATP binding site; it reads FSGGQDSTTCL. Residues cysteine 200, cysteine 215, cysteine 218, and cysteine 221 each coordinate Zn(2+).

The protein belongs to the QueC family. Zn(2+) serves as cofactor.

It carries out the reaction 7-carboxy-7-deazaguanine + NH4(+) + ATP = 7-cyano-7-deazaguanine + ADP + phosphate + H2O + H(+). The protein operates within purine metabolism; 7-cyano-7-deazaguanine biosynthesis. In terms of biological role, catalyzes the ATP-dependent conversion of 7-carboxy-7-deazaguanine (CDG) to 7-cyano-7-deazaguanine (preQ(0)). The protein is 7-cyano-7-deazaguanine synthase of Leptothrix cholodnii (strain ATCC 51168 / LMG 8142 / SP-6) (Leptothrix discophora (strain SP-6)).